We begin with the raw amino-acid sequence, 165 residues long: Nucleotide-binding protein Syncc9605_0652 (165 aa).

The protein belongs to the YajQ family.

Nucleotide-binding protein. This Synechococcus sp. (strain CC9605) protein is Nucleotide-binding protein Syncc9605_0652.